Here is a 249-residue protein sequence, read N- to C-terminus: Deoxyribose-phosphate aldolase (249 aa).

D109 functions as the Proton donor/acceptor in the catalytic mechanism. K171 acts as the Schiff-base intermediate with acetaldehyde in catalysis. The active-site Proton donor/acceptor is K200.

The protein belongs to the DeoC/FbaB aldolase family. DeoC type 1 subfamily.

Its subcellular location is the cytoplasm. It carries out the reaction 2-deoxy-D-ribose 5-phosphate = D-glyceraldehyde 3-phosphate + acetaldehyde. Its pathway is carbohydrate degradation; 2-deoxy-D-ribose 1-phosphate degradation; D-glyceraldehyde 3-phosphate and acetaldehyde from 2-deoxy-alpha-D-ribose 1-phosphate: step 2/2. Functionally, catalyzes a reversible aldol reaction between acetaldehyde and D-glyceraldehyde 3-phosphate to generate 2-deoxy-D-ribose 5-phosphate. The sequence is that of Deoxyribose-phosphate aldolase from Klebsiella pneumoniae subsp. pneumoniae (strain ATCC 700721 / MGH 78578).